Here is a 297-residue protein sequence, read N- to C-terminus: MGFVKVVKNKAYFKRYQVRFRRRREGKTDYYARKRLVIQDKNKYNTPKYRMIVRVTNRDIICQIAYARIEGDMIVCAAYAHELPKYGVKVGLTNYAAAYCTGLLLARRLLNRFGMDKIYEGQVEVNGDEYNVESIDGQPGAFTCYLDAGLARTTTGNKVFGALKGAVDGGLSIPHSTKRFPGYDSESKEFNAEVHRKHIMGQNVADYMRYLMEEDEDAYKKQFSQYIKNNVTPDMMEEMYKKAHAAIRENPVYEKKPKREVKKKRWNRPKMSLAQKKDRVAQKKASFLRAQERAAES.

Glycine 2 is subject to N-acetylglycine. 2 positions are modified to N6-acetyllysine: lysine 5 and lysine 48. Phosphoserine is present on serine 185. Residue lysine 220 is modified to N6-acetyllysine; alternate. Residue lysine 220 forms a Glycyl lysine isopeptide (Lys-Gly) (interchain with G-Cter in SUMO1); alternate linkage. Lysine 220 participates in a covalent cross-link: Glycyl lysine isopeptide (Lys-Gly) (interchain with G-Cter in SUMO2); alternate. Position 232 is a phosphothreonine (threonine 232). Residues 253–297 (YEKKPKREVKKKRWNRPKMSLAQKKDRVAQKKASFLRAQERAAES) form a disordered region. Residues 258–268 (KREVKKKRWNR) are compositionally biased toward basic residues. Position 272 is a phosphoserine (serine 272).

This sequence belongs to the universal ribosomal protein uL18 family. Component of the large ribosomal subunit (LSU). Part of the 5S RNP complex, which is a LSU subcomplex composed of the 5S RNA, RPL5 and RPL11. Component of a hexameric 5S RNP precursor complex, composed of 5S RNA, RRS1, RPF2/BXDC1, RPL5, RPL11 and HEATR3; this complex acts as a precursor for ribosome assembly. Interacts with NVL in an ATP-dependent manner. Interacts with RRP1B. Interacts with IPO5, IPO7 and KPNB1; these interactions may be involved in RPL5 nuclear import for the assembly of ribosomal subunits. Interacts with RRP1B.

The protein resides in the cytoplasm. It localises to the nucleus. The protein localises to the nucleolus. Functionally, component of the ribosome, a large ribonucleoprotein complex responsible for the synthesis of proteins in the cell. The small ribosomal subunit (SSU) binds messenger RNAs (mRNAs) and translates the encoded message by selecting cognate aminoacyl-transfer RNA (tRNA) molecules. The large subunit (LSU) contains the ribosomal catalytic site termed the peptidyl transferase center (PTC), which catalyzes the formation of peptide bonds, thereby polymerizing the amino acids delivered by tRNAs into a polypeptide chain. The nascent polypeptides leave the ribosome through a tunnel in the LSU and interact with protein factors that function in enzymatic processing, targeting, and the membrane insertion of nascent chains at the exit of the ribosomal tunnel. As part of the 5S RNP/5S ribonucleoprotein particle it is an essential component of the LSU, required for its formation and the maturation of rRNAs. It also couples ribosome biogenesis to p53/TP53 activation. As part of the 5S RNP it accumulates in the nucleoplasm and inhibits MDM2, when ribosome biogenesis is perturbed, mediating the stabilization and the activation of TP53. The polypeptide is Large ribosomal subunit protein uL18 (Rpl5) (Rattus norvegicus (Rat)).